Consider the following 802-residue polypeptide: Mitogen-activated protein kinase kinase kinase 20 (802 aa).

At Ser-2 the chain carries N-acetylserine. Phosphoserine occurs at positions 2, 3, and 7. The Protein kinase domain occupies Leu-16–Leu-277. Residues Cys-22–Val-30 and Lys-45 each bind ATP. Asp-133 (proton acceptor) is an active-site residue. Residue Thr-161 is modified to Phosphothreonine; by autocatalysis. Ser-165 carries the post-translational modification Phosphoserine; by autocatalysis. Phosphoserine occurs at positions 275 and 302. A leucine-zipper region spans residues Ile-287 to Leu-308. One can recognise an SAM domain in the interval Trp-339 to Asp-410. Phosphoserine is present on residues Lys-434, Gln-453, and Ser-567. Thr-586 carries the post-translational modification Phosphothreonine. Residues Ser-587, Ser-593, and Ser-599 each carry the phosphoserine modification. The segment covering Tyr-624 to Tyr-642 has biased composition (polar residues). Residues Tyr-624 to Phe-802 form a disordered region. Thr-628 carries the post-translational modification Phosphothreonine. Phosphoserine occurs at positions 634, 638, 649, 650, and 661. Over residues Gly-643 to Ser-666 the composition is skewed to low complexity. The segment covering Ser-667–Arg-678 has biased composition (basic and acidic residues). Residues Arg-670 to Lys-713 form a sensing domain (S) region. Phosphoserine occurs at positions 685, 720, 727, and 733. Basic and acidic residues predominate over residues Pro-728–Val-741. Thr-744 bears the Phosphothreonine mark. The C-terminal domain (CTD) stretch occupies residues Arg-776–Phe-802.

Belongs to the protein kinase superfamily. STE Ser/Thr protein kinase family. MAP kinase kinase kinase subfamily. Homodimer. Interacts with ZNF33A. Component of a signaling complex containing at least AKAP13, PKN1, MAPK14, MAP3K20 and MAP2K3. Within this complex, AKAP13 interacts directly with PKN1, which in turn recruits MAPK14, MAP2K3 and MAP3K20. Interacts with EIF2AK4/GCN2; promoting EIF2AK4/GCN2 kinase activity. In terms of assembly, interacts with isoform ZAKbeta. As to quaternary structure, interacts with isoform ZAKalpha. Mg(2+) is required as a cofactor. In terms of processing, activated by phosphorylation by PKN1, followed by autophosphorylation on Thr-161 and Ser-165. Autophosphorylation in response to ribotoxic stress promotes dissociation from colliding ribosomes and activation.

It localises to the cytoplasm. Its subcellular location is the nucleus. It carries out the reaction L-seryl-[protein] + ATP = O-phospho-L-seryl-[protein] + ADP + H(+). It catalyses the reaction L-threonyl-[protein] + ATP = O-phospho-L-threonyl-[protein] + ADP + H(+). Its activity is regulated as follows. Activated in response to stress, such as ribosomal stress, osmotic shock and ionizing radiation. Activated by phosphorylation by PKN1, followed by autophosphorylation on Thr-161 and Ser-165. In terms of biological role, stress-activated component of a protein kinase signal transduction cascade that promotes programmed cell death in response to various stress, such as ribosomal stress, osmotic shock and ionizing radiation. Acts by catalyzing phosphorylation of MAP kinase kinases, leading to activation of the JNK (MAPK8/JNK1, MAPK9/JNK2 and/or MAPK10/JNK3) and MAP kinase p38 (MAPK11, MAPK12, MAPK13 and/or MAPK14) pathways. Activates JNK through phosphorylation of MAP2K4/MKK4 and MAP2K7/MKK7, and MAP kinase p38 gamma (MAPK12) via phosphorylation of MAP2K3/MKK3 and MAP2K6/MKK6. Involved in stress associated with adrenergic stimulation: contributes to cardiac decompensation during periods of acute cardiac stress. May be involved in regulation of S and G2 cell cycle checkpoint by mediating phosphorylation of CHEK2. Its function is as follows. Key component of the stress-activated protein kinase signaling cascade in response to ribotoxic stress or UV-B irradiation. Acts as the proximal sensor of ribosome collisions during the ribotoxic stress response (RSR). Directly binds to the ribosome by inserting its flexible C-terminus into the ribosomal intersubunit space, thereby acting as a sentinel for colliding ribosomes. Upon ribosome collisions, activates either the stress-activated protein kinase signal transduction cascade or the integrated stress response (ISR), leading to programmed cell death or cell survival, respectively. Dangerous levels of ribosome collisions trigger the autophosphorylation and activation of MAP3K20, which dissociates from colliding ribosomes and phosphorylates MAP kinase kinases, leading to activation of the JNK and MAP kinase p38 pathways that promote programmed cell death. Less dangerous levels of ribosome collisions trigger the integrated stress response (ISR): MAP3K20 activates EIF2AK4/GCN2 independently of its protein-kinase activity, promoting EIF2AK4/GCN2-mediated phosphorylation of EIF2S1/eIF-2-alpha. Also acts as a histone kinase by phosphorylating histone H3 at 'Ser-28' (H3S28ph). Functionally, isoform that lacks the C-terminal region that mediates ribosome-binding: does not act as a sensor of ribosome collisions in response to ribotoxic stress. May act as an antagonist of isoform ZAKalpha: interacts with isoform ZAKalpha, leading to decrease the expression of isoform ZAKalpha. This is Mitogen-activated protein kinase kinase kinase 20 from Mus musculus (Mouse).